The chain runs to 744 residues: Catalase-peroxidase 3 (744 aa).

The segment at residues 106–228 is a cross-link (tryptophyl-tyrosyl-methioninium (Trp-Tyr) (with M-254)); it reads WHFAGTYRIG…LAASEMGLIY (123 aa). The Proton acceptor role is filled by His-107. The tryptophyl-tyrosyl-methioninium (Tyr-Met) (with W-106) cross-link spans 228 to 254; sequence YVDPQGPATLPDPLASARDIRETFRRM. Residue His-269 coordinates heme b.

The protein belongs to the peroxidase family. Peroxidase/catalase subfamily. Homodimer or homotetramer. Requires heme b as cofactor. Post-translationally, formation of the three residue Trp-Tyr-Met cross-link is important for the catalase, but not the peroxidase activity of the enzyme.

The enzyme catalyses H2O2 + AH2 = A + 2 H2O. The catalysed reaction is 2 H2O2 = O2 + 2 H2O. Its function is as follows. Bifunctional enzyme with both catalase and broad-spectrum peroxidase activity. The sequence is that of Catalase-peroxidase 3 from Mycolicibacterium smegmatis (strain ATCC 700084 / mc(2)155) (Mycobacterium smegmatis).